The following is a 467-amino-acid chain: Retinoic acid receptor RXR-alpha (467 aa).

The interval 1-61 (MDTKHFLPLD…LHSPISTLSS (61 aa)) is disordered. The tract at residues 1–139 (MDTKHFLPLD…GNMSSFTKHI (139 aa)) is modulating. Lysine 4 is covalently cross-linked (Glycyl lysine isopeptide (Lys-Gly) (interchain with G-Cter in SUMO2)). Phosphoserine is present on residues serine 22 and serine 28. The span at 32–55 (PSLHPSLGPGLGSPLGSPGQLHSP) shows a compositional bias: low complexity. A phosphoserine; by MAPK8 and MAPK9 mark is found at serine 61 and serine 75. The tract at residues 79 to 109 (PHSMSVPTTPTLGFETGSPQLNSPMNPVSSS) is disordered. Residues 83 to 109 (SVPTTPTLGFETGSPQLNSPMNPVSSS) show a composition bias toward polar residues. Threonine 87 is subject to Phosphothreonine; by MAPK8 and MAPK9. A Glycyl lysine isopeptide (Lys-Gly) (interchain with G-Cter in SUMO) cross-link involves residue lysine 113. Serine 134 carries the phosphoserine modification. Zn(2+)-binding residues include cysteine 140 and cysteine 143. The NR C4-type zinc finger occupies 140–160 (CAICGDRSSGKHYGVYSCEGC). The nuclear receptor DNA-binding region spans 140 to 205 (CAICGDRSSG…RYQKCLAMGM (66 aa)). Residue lysine 150 is modified to N6-acetyllysine. Residues cysteine 157 and cysteine 160 each contribute to the Zn(2+) site. Positions 165–170 (KRTVRK) are nuclear localization signal. Zn(2+) is bound by residues cysteine 176, cysteine 182, cysteine 192, and cysteine 195. An NR C4-type zinc finger spans residues 176–200 (CRDNKDCLIDKRQRNRCQYCRYQKC). The segment at 206 to 229 (KREAVQEERQRGKDRNENEVESTS) is hinge. The span at 211 to 223 (QEERQRGKDRNEN) shows a compositional bias: basic and acidic residues. The tract at residues 211–233 (QEERQRGKDRNENEVESTSSANE) is disordered. Positions 232-463 (NEDMPVEKIL…TFLMEMLEAP (232 aa)) constitute an NR LBD domain. Serine 264 bears the Phosphoserine mark. The residue at position 265 (serine 265) is a Phosphoserine; by MAPK8 and MAPK9. Residues arginine 321 and alanine 332 each coordinate 9-cis-retinoate. Positions 321 and 332 each coordinate all-trans-retinoate. The segment at 353-373 (RVLTELVSKMRDMQMDKTELG) is required for nuclear export.

Belongs to the nuclear hormone receptor family. NR2 subfamily. In terms of assembly, homodimer. Heterodimer (via C-terminus) with RARA; required for ligand-dependent retinoic acid receptor transcriptional activity; association with RARA is enhanced by pulsatile shear stress. Heterodimer with PPARA (via the leucine-like zipper in the LBD); the interaction is required for PPARA transcriptional activity. Heterodimerizes with PPARG. Heterodimerizes (via NR LBD) with RARB. Heterodimerizes with NR1H4; the heterodimerization enhances the binding affinity for LXXLL motifs from coactivators. Interacts with NCOA3 and NCOA6 coactivators. Interacts with FAM120B. Interacts with coactivator PELP1, SENP6, SFPQ, DNTTIP2 and RNF8. Interacts with PRMT2. Interacts with ASXL1. Interacts with BHLHE40/DEC1, BHLHE41/DEC2, MED1, NCOR1 and NCOR2. Interacts in a ligand-dependent fashion with MED1 and NCOA1. Interacts with VDR. Interacts with EP300; the interaction is decreased by 9-cis retinoic acid. Heterodimer (via C-terminus) with NR4A1 (DNA-binding domain); the interaction is enhanced by 9-cis retinoic acid. NR4A1 competes with EP300 for interaction with RXRA and thereby attenuates EP300 mediated acetylation of RXRA. In the absence of hormonal ligand, interacts with TACC1. Interacts ith IGFBP3. Post-translationally, phosphorylated on serine and threonine residues mainly in the N-terminal modulating domain. Constitutively phosphorylated on Ser-22 in the presence or absence of ligand. Under stress conditions, hyperphosphorylated by activated JNK on Ser-61, Ser-75, Thr-87 and Ser-265. Phosphorylated on Ser-28, in vitro, by PKA. This phosphorylation is required for repression of cAMP-mediated transcriptional activity of RARA. Ubiquitinated by UBR5, leading to its degradation: UBR5 specifically recognizes and binds ligand-bound RXRA when it is not associated with coactivators (NCOAs). In presence of NCOAs, the UBR5-degron is not accessible, preventing its ubiquitination and degradation. In terms of processing, sumoylation negatively regulates transcriptional activity. Desumoylated specifically by SENP6. Post-translationally, acetylated by EP300; acetylation enhances DNA binding and transcriptional activity. In terms of tissue distribution, expressed in the adrenal gland with main expression in the zona fasciculata and medulla (at protein level). Expressed in aortic endothelial cells, with high expression in the descending thoracic aorta and the outer curvature of the aortic arch, where pulsatory shear stress exists, but very low in the inner curvature of the aortic arch, where oscillatory shear stress prevails (at protein level).

The protein localises to the nucleus. The protein resides in the cytoplasm. It localises to the mitochondrion. Functionally, receptor for retinoic acid that acts as a transcription factor. Forms homo- or heterodimers with retinoic acid receptors (RARs) and binds to target response elements in response to their ligands, all-trans or 9-cis retinoic acid, to regulate gene expression in various biological processes. The RAR/RXR heterodimers bind to the retinoic acid response elements (RARE) composed of tandem 5'-AGGTCA-3' sites known as DR1-DR5 to regulate transcription. The high affinity ligand for retinoid X receptors (RXRs) is 9-cis retinoic acid. In the absence of ligand, the RXR-RAR heterodimers associate with a multiprotein complex containing transcription corepressors that induce histone deacetylation, chromatin condensation and transcriptional suppression. On ligand binding, the corepressors dissociate from the receptors and coactivators are recruited leading to transcriptional activation. Serves as a common heterodimeric partner for a number of nuclear receptors, such as RARA, RARB and PPARA. The RXRA/RARB heterodimer can act as a transcriptional repressor or transcriptional activator, depending on the RARE DNA element context. The RXRA/PPARA heterodimer is required for PPARA transcriptional activity on fatty acid oxidation genes such as ACOX1 and the P450 system genes. Together with RARA, positively regulates microRNA-10a expression, thereby inhibiting the GATA6/VCAM1 signaling response to pulsatile shear stress in vascular endothelial cells. Acts as an enhancer of RARA binding to RARE DNA element. May facilitate the nuclear import of heterodimerization partners such as VDR and NR4A1. Promotes myelin debris phagocytosis and remyelination by macrophages. Plays a role in the attenuation of the innate immune system in response to viral infections, possibly by negatively regulating the transcription of antiviral genes such as type I IFN genes. Involved in the regulation of calcium signaling by repressing ITPR2 gene expression, thereby controlling cellular senescence. This Rattus norvegicus (Rat) protein is Retinoic acid receptor RXR-alpha (Rxra).